The chain runs to 122 residues: Basic phospholipase A2 PLA-B (122 aa).

Cystine bridges form between Cys-26–Cys-115, Cys-28–Cys-44, Cys-43–Cys-95, Cys-49–Cys-122, Cys-50–Cys-88, Cys-57–Cys-81, and Cys-75–Cys-86. Ca(2+)-binding residues include Tyr-27, Gly-29, and Gly-31. His-47 is a catalytic residue. Asp-48 provides a ligand contact to Ca(2+). The active site involves Asp-89.

This sequence belongs to the phospholipase A2 family. Group II subfamily. D49 sub-subfamily. Ca(2+) serves as cofactor. Expressed by the venom gland.

It localises to the secreted. The catalysed reaction is a 1,2-diacyl-sn-glycero-3-phosphocholine + H2O = a 1-acyl-sn-glycero-3-phosphocholine + a fatty acid + H(+). In terms of biological role, snake venom phospholipase A2 (PLA2) that displays edema-inducing activities. PLA-B is three times more active than PLA-A in edema-inducing activities. PLA2 catalyzes the calcium-dependent hydrolysis of the 2-acyl groups in 3-sn-phosphoglycerides. The sequence is that of Basic phospholipase A2 PLA-B from Protobothrops flavoviridis (Habu).